Consider the following 470-residue polypeptide: Homogentisate 1,2-dioxygenase (470 aa).

Fe cation-binding residues include His356, Glu362, and His392.

It belongs to the homogentisate dioxygenase family. The cofactor is Fe cation.

The enzyme catalyses homogentisate + O2 = 4-maleylacetoacetate + H(+). It functions in the pathway amino-acid degradation; L-phenylalanine degradation; acetoacetate and fumarate from L-phenylalanine: step 4/6. This Oryza sativa subsp. japonica (Rice) protein is Homogentisate 1,2-dioxygenase (HGO).